We begin with the raw amino-acid sequence, 286 residues long: Phosphatidylglycerol--prolipoprotein diacylglyceryl transferase (286 aa).

Helical transmembrane passes span 29-49 (IHWY…VGTY), 66-86 (LVFY…VFFY), 101-121 (VWEG…AMML), 130-150 (FLDL…LGRI), 181-201 (PSQL…LFWF), 209-229 (AAVA…VEFV), and 250-270 (LSLP…RHPA). Arg149 is an a 1,2-diacyl-sn-glycero-3-phospho-(1'-sn-glycerol) binding site.

This sequence belongs to the Lgt family.

The protein localises to the cell inner membrane. The enzyme catalyses L-cysteinyl-[prolipoprotein] + a 1,2-diacyl-sn-glycero-3-phospho-(1'-sn-glycerol) = an S-1,2-diacyl-sn-glyceryl-L-cysteinyl-[prolipoprotein] + sn-glycerol 1-phosphate + H(+). Its pathway is protein modification; lipoprotein biosynthesis (diacylglyceryl transfer). Functionally, catalyzes the transfer of the diacylglyceryl group from phosphatidylglycerol to the sulfhydryl group of the N-terminal cysteine of a prolipoprotein, the first step in the formation of mature lipoproteins. The protein is Phosphatidylglycerol--prolipoprotein diacylglyceryl transferase of Teredinibacter turnerae (strain ATCC 39867 / T7901).